The primary structure comprises 607 residues: Replication protein E1 (607 aa).

The Nuclear localization signal signature appears at 81-83 (KRK). Ser-87 and Ser-95 each carry phosphoserine; by host. Positions 94–103 (LSPRLQSLNL) match the Nuclear export signal motif. The interval 147–310 (QGGVGLGHIE…TMIQHQTADS (164 aa)) is DNA-binding region. An SF3 helicase domain is found at 409 to 559 (LNFIVFLDKF…FPFDSDDKPL (151 aa)). Residue 435 to 442 (GPPDTGKS) coordinates ATP. Lys-516 is covalently cross-linked (Glycyl lysine isopeptide (Lys-Gly) (interchain with G-Cter in SUMO)). Positions 583–607 (QEDEGEDGSTQRTFQCTTRQVNGPV) are disordered. Positions 590–607 (GSTQRTFQCTTRQVNGPV) are enriched in polar residues.

This sequence belongs to the papillomaviridae E1 protein family. In terms of assembly, can form hexamers. Interacts with E2 protein; this interaction increases E1 DNA binding specificity. Interacts with host DNA polymerase subunit POLA2. Interacts with host single stranded DNA-binding protein RPA1. Interacts with host TOP1; this interaction stimulates the enzymatic activity of TOP1. Post-translationally, phosphorylated. Sumoylated.

The protein resides in the host nucleus. The enzyme catalyses Couples ATP hydrolysis with the unwinding of duplex DNA by translocating in the 3'-5' direction.. It catalyses the reaction ATP + H2O = ADP + phosphate + H(+). Functionally, ATP-dependent DNA 3'-5' helicase required for initiation of viral DNA replication. It forms a complex with the viral E2 protein. The E1-E2 complex binds to the replication origin which contains binding sites for both proteins. During the initial step, a dimer of E1 interacts with a dimer of protein E2 leading to a complex that binds the viral origin of replication with high specificity. Then, a second dimer of E1 displaces the E2 dimer in an ATP-dependent manner to form the E1 tetramer. Following this, two E1 monomers are added to each half of the site, which results in the formation of two E1 trimers on the viral ori. Subsequently, two hexamers will be created. The double hexamer acts as a bi-directional helicase machinery and unwinds the viral DNA and then recruits the host DNA polymerase to start replication. This Human papillomavirus 23 protein is Replication protein E1.